A 529-amino-acid chain; its full sequence is Inosine-5'-monophosphate dehydrogenase (529 aa).

CBS domains are found at residues 129–185 (MVTD…SKQV) and 189–246 (MTKA…PLAT). NAD(+)-binding positions include D283 and 334-336 (GVG). Residues G336 and G338 each coordinate K(+). Residue S339 participates in IMP binding. C341 is a K(+) binding site. Residue C341 is the Thioimidate intermediate of the active site. Residues 374 to 376 (DGG), 397 to 398 (GS), and 421 to 425 (YRGMG) contribute to the IMP site. Catalysis depends on R443, which acts as the Proton acceptor. E458 contacts IMP. The K(+) site is built by E511, S512, and H513.

It belongs to the IMPDH/GMPR family. In terms of assembly, homotetramer. Requires K(+) as cofactor.

It carries out the reaction IMP + NAD(+) + H2O = XMP + NADH + H(+). It participates in purine metabolism; XMP biosynthesis via de novo pathway; XMP from IMP: step 1/1. Its activity is regulated as follows. Mycophenolic acid (MPA) is a non-competitive inhibitor that prevents formation of the closed enzyme conformation by binding to the same site as the amobile flap. In contrast, mizoribine monophosphate (MZP) is a competitive inhibitor that induces the closed conformation. MPA is a potent inhibitor of mammalian IMPDHs but a poor inhibitor of the bacterial enzymes. MZP is a more potent inhibitor of bacterial IMPDH. Catalyzes the conversion of inosine 5'-phosphate (IMP) to xanthosine 5'-phosphate (XMP), the first committed and rate-limiting step in the de novo synthesis of guanine nucleotides, and therefore plays an important role in the regulation of cell growth. The sequence is that of Inosine-5'-monophosphate dehydrogenase from Mycobacterium bovis (strain ATCC BAA-935 / AF2122/97).